A 119-amino-acid polypeptide reads, in one-letter code: Protein TusC (119 aa).

The protein belongs to the DsrF/TusC family. In terms of assembly, heterohexamer, formed by a dimer of trimers. The hexameric TusBCD complex contains 2 copies each of TusB, TusC and TusD. The TusBCD complex interacts with TusE.

Its subcellular location is the cytoplasm. Part of a sulfur-relay system required for 2-thiolation of 5-methylaminomethyl-2-thiouridine (mnm(5)s(2)U) at tRNA wobble positions. This is Protein TusC from Photorhabdus laumondii subsp. laumondii (strain DSM 15139 / CIP 105565 / TT01) (Photorhabdus luminescens subsp. laumondii).